Reading from the N-terminus, the 347-residue chain is NADH-ubiquinone oxidoreductase chain 2 (347 aa).

10 consecutive transmembrane segments (helical) span residues 1-21, 25-45, 59-79, 111-131, 149-169, 178-198, 201-221, 237-257, 276-296, and 326-346; these read MNPLVFTVIMSTVMLGTAIVA, HWLMAWIGFEMNMLAVIPILM, YFLTQATASMLLMLAVTMNLV, FHFWVPEVAQGISLPSGLILL, INLDLLMTLSILSIGIGGWGG, IMAYSSIAHMGWMTTILAYNP, TLLNLAIYILLTTTTFMMFML, MPLLTTAILLTMLSLGGLPPL, VILPTMMAVMALLNLYFYMRL, and LSPLIILSTLILPLSPMLALL.

This sequence belongs to the complex I subunit 2 family. As to quaternary structure, core subunit of respiratory chain NADH dehydrogenase (Complex I) which is composed of 45 different subunits. Interacts with TMEM242.

It is found in the mitochondrion inner membrane. It carries out the reaction a ubiquinone + NADH + 5 H(+)(in) = a ubiquinol + NAD(+) + 4 H(+)(out). Its function is as follows. Core subunit of the mitochondrial membrane respiratory chain NADH dehydrogenase (Complex I) which catalyzes electron transfer from NADH through the respiratory chain, using ubiquinone as an electron acceptor. Essential for the catalytic activity and assembly of complex I. The chain is NADH-ubiquinone oxidoreductase chain 2 from Pteropus pumilus (Little golden-mantled flying fox).